Here is an 815-residue protein sequence, read N- to C-terminus: Echinoderm microtubule-associated protein-like 1 (815 aa).

Positions Ser31 to Gln72 form a coiled coil. The segment at Asn77–Val179 is disordered. Over residues Pro92–Thr101 the composition is skewed to polar residues. Residue Ser113 is modified to Phosphoserine. Residues Thr126–Arg138 show a composition bias toward polar residues. Residues Gly143–Gly153 show a composition bias toward basic and acidic residues. The span at Asn156 to Lys168 shows a compositional bias: low complexity. The tandem atypical propeller in EMLs stretch occupies residues Lys176–Ile815. 12 WD repeats span residues Glu261–Ser310, Thr315–Trp358, Lys363–Leu400, Gln409–Lys446, Arg450–Gly489, Lys493–Thr530, Phe535–Ala572, Val578–Thr613, Asp617–Val655, Arg664–Pro701, Ser709–Tyr768, and Ala775–Val814.

The protein belongs to the WD repeat EMAP family. As to quaternary structure, homotrimer; self-association is mediated by the N-terminal coiled coil. Does not interact with EML3. Binds repolymerizing microtubules. Binds unpolymerized tubulins via its WD repeat region. Interacts with TASOR. As to expression, ubiquitous; expressed in most tissues with the exception of thymus and peripheral blood lymphocytes.

The protein localises to the cytoplasm. It localises to the perinuclear region. Its subcellular location is the cytoskeleton. Its function is as follows. Modulates the assembly and organization of the microtubule cytoskeleton, and probably plays a role in regulating the orientation of the mitotic spindle and the orientation of the plane of cell division. Required for normal proliferation of neuronal progenitor cells in the developing brain and for normal brain development. Does not affect neuron migration per se. In Homo sapiens (Human), this protein is Echinoderm microtubule-associated protein-like 1 (EML1).